A 290-amino-acid polypeptide reads, in one-letter code: Membrane-spanning 4-domains subfamily A member 8 (290 aa).

A compositionally biased stretch (polar residues) spans 1 to 21; the sequence is MNRPTAQGAVNLSGSKFSTAK. The segment at 1-25 is disordered; sequence MNRPTAQGAVNLSGSKFSTAKSWEP. Topologically, residues 1–108 are cytoplasmic; that stretch reads MNRPTAQGAV…PAQRVLKKGQ (108 aa). The chain crosses the membrane as a helical span at residues 109-129; that stretch reads VLGAIQILIGLVHIGLGSIMI. Residues 130–138 lie on the Extracellular side of the membrane; the sequence is TNLFSHYTP. A helical transmembrane segment spans residues 139-159; it reads VSLYGGFPFWGGIWFIISGSL. Over 160–174 the chain is Cytoplasmic; it reads SVAAETQPNSPCLLN. The chain crosses the membrane as a helical span at residues 175–195; sequence GSVGLNIFSAICSAVGIMLFI. The Extracellular segment spans residues 196–220; the sequence is TDISISSGYIYPSYYPYQENLGVRT. The helical transmembrane segment at 221 to 241 threads the bilayer; that stretch reads GVAISSVLLIFCLLELSIASV. The Cytoplasmic segment spans residues 242–290; that stretch reads SSHFGCQVACCHYNNPGVVIPNVYAANPVVIPEPPNPIPSYSEVVQDSR.

The protein belongs to the MS4A family. Expressed strongly in intestine and colon and minimally in lung and ovary.

The protein resides in the membrane. In terms of biological role, may be involved in signal transduction as a component of a multimeric receptor complex. This Mus musculus (Mouse) protein is Membrane-spanning 4-domains subfamily A member 8 (Ms4a8).